We begin with the raw amino-acid sequence, 426 residues long: Endothelin-1 receptor (426 aa).

Residues 1–20 (MGVLCFLASFWLALVGGAIA) form the signal peptide. The Extracellular portion of the chain corresponds to 21–80 (DNAERYSANLSSHVEDFTPFPGTEFNFLGTTLQPPNLALPSNGSMHGYCPQQTKITTAFK). N-linked (GlcNAc...) asparagine glycosylation is found at Asn-29 and Asn-62. A helical membrane pass occupies residues 81 to 102 (YINTVISCTIFIVGMVGNATLL). Residues 103-112 (RIIYQNKCMR) are Cytoplasmic-facing. A helical transmembrane segment spans residues 113–132 (NGPNALIASLALGDLIYVVI). Over 133 to 159 (DLPINVFKLLAGRWPFDHNDFGVFLCK) the chain is Extracellular. Cys-158 and Cys-239 are disulfide-bonded. The helical transmembrane segment at 160-181 (LFPFLQKSSVGITVLNLCALSV) threads the bilayer. Topologically, residues 182-205 (DRYRAVASWSRVQGIGIPLITAIE) are cytoplasmic. Residues 206 to 229 (IVSIWILSFILAIPEAIGFVMVPF) traverse the membrane as a helical segment. Topologically, residues 230–256 (EYKGEQHRTCMLNATTKFMEFYQDVKD) are extracellular. Residues 257–278 (WWLFGFYFCMPLVCTAIFYTLM) form a helical membrane-spanning segment. Over 279–306 (TCEMLNRRNGSLRIALSEHLKQRREVAK) the chain is Cytoplasmic. Residues 307–328 (TVFCLVVIFALCWFPLHLSRIL) form a helical membrane-spanning segment. Residues 329–347 (KKTVYDEMDKNRCELLSFL) lie on the Extracellular side of the membrane. Residues 348–372 (LLMDYIGINLATMNSCINPIALYFV) traverse the membrane as a helical segment. Over 373-426 (SKKFKNCFQSCLCCCCHQSKSLMTSVPMNGTSIQWKNQEQNHNTERSSHKDSMN) the chain is Cytoplasmic. Ser-424 is subject to Phosphoserine.

The protein belongs to the G-protein coupled receptor 1 family. Endothelin receptor subfamily. EDNRA sub-subfamily. In terms of assembly, interacts with HDAC7 and KAT5. Predominantly expressed in vascular smooth muscle cells of a variety of issues, bronchial smooth muscle cells, myocardium, and the pituitary gland.

Its subcellular location is the cell membrane. In terms of biological role, receptor for endothelin-1. Mediates its action by association with G proteins that activate a phosphatidylinositol-calcium second messenger system. The rank order of binding affinities for ET-A is: ET1 &gt; ET2 &gt;&gt; ET3. The chain is Endothelin-1 receptor from Rattus norvegicus (Rat).